We begin with the raw amino-acid sequence, 525 residues long: MSCQLLPVLLLLLLRASCPWGHEQGPRSPSEEPPEEEIPKEDGILVLSRHTLGLALREHPALLVEFYAPWCGHCQALAPEYSKAAAVLAAESSVVMLAKVDGPAQPELAEEFGVTEYPTLKFFRDGNRTHPEEYTGPREAEGIAEWLRRRVGPSAMRLEDEAAAQALIDGRDLVVIGFFQDLHDEDVATFLALAQDALDMTFGLTDRPQLFQQFGLTKDTVVLFKKFDEGRADFPVDEELGLDLGDLSRFLVTHSMRLVTEFNSQTSAKIFAARILNHLLLFVNQTLAAHRELLVGFGEAAPHFRGQVLFVVVDVAADNEHVLQYFGLKAEAAPTLRLVNLETTKKYAPVDGGPVTTASITAFCHAVLNGQVKPYLLSQEVPPDWDQRPVKTLVGKNFEQVAFDETKNVFVKFYAPWCTHCKEMAPAWEALAEKYQDHEDVIIAELDATANELDAFAVHGFPTLKYFPAGPGRKVIEYKSTRDLGTFSKFLDNGGVLPTEEPLEEPAAPFPEPPANSTMGSKEEL.

A signal peptide spans 1–21 (MSCQLLPVLLLLLLRASCPWG). The 126-residue stretch at 27 to 152 (RSPSEEPPEE…IAEWLRRRVG (126 aa)) folds into the Thioredoxin 1 domain. Active-site nucleophile residues include Cys71 and Cys74. A disulfide bond links Cys71 and Cys74. N-linked (GlcNAc...) asparagine glycans are attached at residues Asn127 and Asn284. In terms of domain architecture, Thioredoxin 2 spans 367–496 (VLNGQVKPYL…FSKFLDNGGV (130 aa)). Active-site nucleophile residues include Cys418 and Cys421. The cysteines at positions 418 and 421 are disulfide-linked. The interval 498–525 (PTEEPLEEPAAPFPEPPANSTMGSKEEL) is disordered. Asn516 carries an N-linked (GlcNAc...) asparagine glycan. Positions 516-525 (NSTMGSKEEL) are enriched in polar residues. The Prevents secretion from ER motif lies at 522-525 (KEEL).

It belongs to the protein disulfide isomerase family. In terms of assembly, monomer; predominantly as monomer under reducing conditions. Homodimer; disulfide-linked. Part of a large chaperone multiprotein complex comprising DNAJB11, HSP90B1, HSPA5, HYOU, PDIA2, PDIA4, PDIA6, PPIB, SDF2L1, UGGT1 and very small amounts of ERP29, but not, or at very low levels, CALR nor CANX. Post-translationally, the disulfide-linked homodimer exhibits an enhanced chaperone activity. Glycosylated.

The protein localises to the endoplasmic reticulum lumen. It carries out the reaction Catalyzes the rearrangement of -S-S- bonds in proteins.. In terms of biological role, acts as an intracellular estrogen-binding protein. May be involved in modulating cellular levels and biological functions of estrogens in the pancreas. May act as a chaperone that inhibits aggregation of misfolded proteins. The polypeptide is Protein disulfide-isomerase A2 (PDIA2) (Pongo abelii (Sumatran orangutan)).